The sequence spans 507 residues: MSGTLARSVMVLGTTSGAGKSWLTTALCRYYARQGLKVAPFKAQNMSNNARVVAGGEIGSAQYFQALAARAEPDVRMNPLLLKPEKDTQSQVILMGQVDAELSRMPWRGRSASVWPVIARALDELLAENDVVVIEGAGSPAEINLKSSDIVNMRVAQHTGASCLLVTDIDRGGAFAHLYGTWAMLDEAERQLIKGFVLNKFRGDASLLAPGPQMLQEMTGVPTVATLPMWWQHGLPEEDGVFDMAPTLGTGVSTLPPEGAELARGGPSLRSPRPVIAVIAYPRISNLDEFQPLKNVPGVHLKWVRSPGELAGVDWIILPGSKHTSGDLAWLRAQGLDRAVAAHAEQGGAVLGVCGGLQMLGEALIDPHGIDGNAPGLGLLPVVTVFEEGKTVQRRQARFGELAGAWAALSGVGLQGYEIHHGQTAPHTAMAAAGDIAHGVMAEGLAWQNTRGNVLGLYLHGMFEDPAVLQALFGATVPTLDAVFDGLADYIEQHFEPGVLQSLIATP.

Residues 273–468 (RPVIAVIAYP…LHGMFEDPAV (196 aa)) enclose the GATase cobBQ-type domain. The Nucleophile role is filled by cysteine 354. Histidine 460 is a catalytic residue.

The protein belongs to the CobB/CobQ family. CobQ subfamily.

Its pathway is cofactor biosynthesis; adenosylcobalamin biosynthesis. Functionally, catalyzes amidations at positions B, D, E, and G on adenosylcobyrinic A,C-diamide. NH(2) groups are provided by glutamine, and one molecule of ATP is hydrogenolyzed for each amidation. This is Cobyric acid synthase from Polaromonas sp. (strain JS666 / ATCC BAA-500).